A 240-amino-acid chain; its full sequence is Ribonuclease HII (240 aa).

The RNase H type-2 domain occupies 27-226; sequence GPVAGVDEAG…GETRSLRLED (200 aa). Residues Asp33, Glu34, and Asp127 each coordinate a divalent metal cation.

Belongs to the RNase HII family. It depends on Mn(2+) as a cofactor. Requires Mg(2+) as cofactor.

The protein localises to the cytoplasm. It carries out the reaction Endonucleolytic cleavage to 5'-phosphomonoester.. In terms of biological role, endonuclease that specifically degrades the RNA of RNA-DNA hybrids. The protein is Ribonuclease HII of Parafrankia sp. (strain EAN1pec).